A 314-amino-acid chain; its full sequence is Acetaldehyde dehydrogenase 2 (314 aa).

NAD(+) is bound at residue 11–14 (SGNI). C129 functions as the Acyl-thioester intermediate in the catalytic mechanism. NAD(+) is bound by residues 160–168 (SAGPGTRAN) and N291.

This sequence belongs to the acetaldehyde dehydrogenase family.

The catalysed reaction is acetaldehyde + NAD(+) + CoA = acetyl-CoA + NADH + H(+). The chain is Acetaldehyde dehydrogenase 2 from Rhodococcus erythropolis (strain PR4 / NBRC 100887).